The following is a 311-amino-acid chain: Formimidoylglutamase (311 aa).

Residues His127, Asp152, His154, Asp156, Cys236, and Asp238 each coordinate Mn(2+).

This sequence belongs to the arginase family. It depends on Mn(2+) as a cofactor.

It catalyses the reaction N-formimidoyl-L-glutamate + H2O = formamide + L-glutamate. The protein operates within amino-acid degradation; L-histidine degradation into L-glutamate; L-glutamate from N-formimidoyl-L-glutamate (hydrolase route): step 1/1. Catalyzes the conversion of N-formimidoyl-L-glutamate to L-glutamate and formamide. This is Formimidoylglutamase from Macrococcus caseolyticus (strain JCSC5402) (Macrococcoides caseolyticum).